The sequence spans 532 residues: Small ribosomal subunit protein uS2cz (532 aa).

Positions 1–271 are N-terminal extension; the sequence is METLEKNFKK…SPISSKEKKA (271 aa). 3 TRAM domains span residues 38-97, 127-186, and 197-260; these read ALQA…SILN, DFKV…KPIL, and NQMI…KILK.

It belongs to the universal ribosomal protein uS2 family.

The protein localises to the plastid. The protein resides in the chloroplast. The chain is Small ribosomal subunit protein uS2cz (rps2-1) from Tetradesmus obliquus (Green alga).